The sequence spans 389 residues: PqqA peptide cyclase (389 aa).

The Radical SAM core domain maps to 19-234 (VGLPLWLLAE…TNEYRDQLAA (216 aa)). The [4Fe-4S] cluster site is built by Cys-33, Cys-37, and Cys-40.

It belongs to the radical SAM superfamily. PqqE family. Interacts with PqqD. The interaction is necessary for activity of PqqE. Requires [4Fe-4S] cluster as cofactor.

It catalyses the reaction [PQQ precursor protein] + S-adenosyl-L-methionine = E-Y cross-linked-[PQQ precursor protein] + 5'-deoxyadenosine + L-methionine + H(+). It participates in cofactor biosynthesis; pyrroloquinoline quinone biosynthesis. Catalyzes the cross-linking of a glutamate residue and a tyrosine residue in the PqqA protein as part of the biosynthesis of pyrroloquinoline quinone (PQQ). The sequence is that of PqqA peptide cyclase from Pseudomonas syringae pv. tomato (strain ATCC BAA-871 / DC3000).